The chain runs to 350 residues: Methionine import ATP-binding protein MetN (350 aa).

One can recognise an ABC transporter domain in the interval 2-242; that stretch reads IELKGISQHF…PRHDVTRALI (241 aa). 39–46 contacts ATP; it reads GRSGAGKS.

Belongs to the ABC transporter superfamily. Methionine importer (TC 3.A.1.24) family. As to quaternary structure, the complex is composed of two ATP-binding proteins (MetN), two transmembrane proteins (MetI) and a solute-binding protein (MetQ).

The protein resides in the cell inner membrane. The enzyme catalyses L-methionine(out) + ATP + H2O = L-methionine(in) + ADP + phosphate + H(+). The catalysed reaction is D-methionine(out) + ATP + H2O = D-methionine(in) + ADP + phosphate + H(+). Its function is as follows. Part of the ABC transporter complex MetNIQ involved in methionine import. Responsible for energy coupling to the transport system. This Ralstonia nicotianae (strain ATCC BAA-1114 / GMI1000) (Ralstonia solanacearum) protein is Methionine import ATP-binding protein MetN.